Consider the following 424-residue polypeptide: Serine--tRNA ligase (424 aa).

231-233 is a binding site for L-serine; that stretch reads TAE. 262-264 contacts ATP; the sequence is RSE. Glutamate 285 contributes to the L-serine binding site. ATP is bound at residue 349 to 352; it reads EISS. Serine 385 serves as a coordination point for L-serine.

This sequence belongs to the class-II aminoacyl-tRNA synthetase family. Type-1 seryl-tRNA synthetase subfamily. In terms of assembly, homodimer. The tRNA molecule binds across the dimer.

The protein resides in the cytoplasm. The catalysed reaction is tRNA(Ser) + L-serine + ATP = L-seryl-tRNA(Ser) + AMP + diphosphate + H(+). The enzyme catalyses tRNA(Sec) + L-serine + ATP = L-seryl-tRNA(Sec) + AMP + diphosphate + H(+). Its pathway is aminoacyl-tRNA biosynthesis; selenocysteinyl-tRNA(Sec) biosynthesis; L-seryl-tRNA(Sec) from L-serine and tRNA(Sec): step 1/1. Catalyzes the attachment of serine to tRNA(Ser). Is also able to aminoacylate tRNA(Sec) with serine, to form the misacylated tRNA L-seryl-tRNA(Sec), which will be further converted into selenocysteinyl-tRNA(Sec). This chain is Serine--tRNA ligase, found in Bacillus cereus (strain ATCC 10987 / NRS 248).